The sequence spans 440 residues: DNA dC-&gt;dU-editing enzyme APOBEC-3 (440 aa).

CMP/dCMP-type deaminase domains are found at residues 49–165 (GRKD…AQVA) and 249–368 (EEEF…LCSL). His-82 contacts Zn(2+). Glu-84 acts as the Proton donor in catalysis. Zn(2+) is bound by residues Cys-116, Cys-119, His-299, Cys-327, and Cys-330.

It belongs to the cytidine and deoxycytidylate deaminase family. As to quaternary structure, homodimer. Interacts with mouse mammary tumor virus (MMTV) nucleocapsid protein p14. It depends on Zn(2+) as a cofactor. Expressed in spleen, node and lung.

It localises to the cytoplasm. The catalysed reaction is a 2'-deoxycytidine in single-stranded DNA + H2O + H(+) = a 2'-deoxyuridine in single-stranded DNA + NH4(+). Its function is as follows. DNA deaminase (cytidine deaminase) which acts as an inhibitor of retrovirus replication and retrotransposon mobility via deaminase-dependent and -independent mechanisms. Selectively targets single-stranded DNA and does not deaminate double-stranded DNA or single- or double-stranded RNA. Exhibits antiviral activity against HIV-1, simian immunodeficiency viruses (SIVs), mouse mammary tumor virus (MMTV) and friend murine leukemia virus (FrMLV) and may inhibit the mobility of LTR retrotransposons. The sequence is that of DNA dC-&gt;dU-editing enzyme APOBEC-3 (Apobec3) from Mus musculus (Mouse).